A 75-amino-acid polypeptide reads, in one-letter code: Dermaseptin-SP4 (75 aa).

The N-terminal stretch at 1–22 is a signal peptide; it reads MAFLKKSLFLVLFLGLVSLSMC. The propeptide occupies 23–45; the sequence is EEEKRENEVEEEQEDDEQSELRR. Position 72 is a proline amide (proline 72). Residues 74-75 constitute a propeptide that is removed on maturation; it reads EQ.

It belongs to the frog skin active peptide (FSAP) family. Dermaseptin subfamily. Expressed by the skin glands.

Its subcellular location is the secreted. The protein localises to the target cell membrane. In terms of biological role, antimicrobial peptide with activity against Gram-positive and Gram-negative bacteria and fungi. Has been tested against E.coli (MIC=47.25-128 uM), S.aureus (MIC=189-512 uM), K.pneumoniae (MIC=189 uM) and C.albicans (MIC&gt;189 uM). Probably acts by disturbing membrane functions with its alpha-helical amphipathic structure. May penetrate bacterial membranes, but stay at the mammalian membrane surface. Shows a weak hemolytic activity. The polypeptide is Dermaseptin-SP4 (Agalychnis spurrelli (Gliding leaf frog)).